The chain runs to 692 residues: DNA ligase (692 aa).

NAD(+)-binding positions include 40–44 (DAAYD), 89–90 (SL), and glutamate 121. Residue lysine 123 is the N6-AMP-lysine intermediate of the active site. 4 residues coordinate NAD(+): arginine 144, glutamate 181, lysine 297, and lysine 321. 4 residues coordinate Zn(2+): cysteine 415, cysteine 417, cysteine 439, and cysteine 445. One can recognise a BRCT domain in the interval 614-692 (KTDTAVAGKT…EDEWLEMVGS (79 aa)).

Belongs to the NAD-dependent DNA ligase family. LigA subfamily. Requires Mg(2+) as cofactor. The cofactor is Mn(2+).

It carries out the reaction NAD(+) + (deoxyribonucleotide)n-3'-hydroxyl + 5'-phospho-(deoxyribonucleotide)m = (deoxyribonucleotide)n+m + AMP + beta-nicotinamide D-nucleotide.. Its function is as follows. DNA ligase that catalyzes the formation of phosphodiester linkages between 5'-phosphoryl and 3'-hydroxyl groups in double-stranded DNA using NAD as a coenzyme and as the energy source for the reaction. It is essential for DNA replication and repair of damaged DNA. The chain is DNA ligase from Phenylobacterium zucineum (strain HLK1).